A 646-amino-acid chain; its full sequence is Chaperone protein DnaK (646 aa).

Residue T198 is modified to Phosphothreonine; by autocatalysis. The interval 603 to 646 is disordered; the sequence is EQAQQAGGAEGFDPNAFQGGDAGQQKADDGVVDAEFTEVKDDKK. Residues 618-627 show a composition bias toward low complexity; it reads AFQGGDAGQQ.

It belongs to the heat shock protein 70 family.

Its function is as follows. Acts as a chaperone. This is Chaperone protein DnaK from Acinetobacter baumannii (strain AB307-0294).